The following is a 65-amino-acid chain: Large ribosomal subunit protein uL29 (65 aa).

The protein belongs to the universal ribosomal protein uL29 family.

The chain is Large ribosomal subunit protein uL29 from Thioalkalivibrio sulfidiphilus (strain HL-EbGR7).